Consider the following 444-residue polypeptide: Nuclear distribution protein nudF (444 aa).

The LisH domain maps to 9–41; the sequence is QAEALHKAMLAYLSVINAPQTAETLREELHFDE. Positions 60–88 form a coiled coil; that stretch reads TGIARLQRRINDLEAEVRSLQAELEASPS. Residues 83 to 107 are disordered; that stretch reads LEASPSAARAKNQDPTNWLPKPSST. 7 WD repeats span residues 112–153, 155–195, 199–239, 243–282, 285–345, 347–386, and 391–437; these read SHRD…RTLK, HIRG…ANIR, GHDH…CVKV, ATESWIRDVSPSFDGKWLVSGGRDQAITVWEVSSAEPKAA, GHEN…IKTL, GHDNWVRGLVFHPGGKYLFSVSDDKTIRCWDLSQEGRLVK, and AHEH…GCAD.

This sequence belongs to the WD repeat LIS1/nudF family. Interacts with dynein. Self-associates. Interacts with bnfA, nudC and nudE.

The protein localises to the cytoplasm. It localises to the cytoskeleton. The protein resides in the spindle pole. In terms of biological role, positively regulates the activity of the minus-end directed microtubule motor protein dynein. May enhance dynein-mediated microtubule sliding by targeting dynein to the microtubule plus end. Required for nuclear migration during vegetative growth as well as development. Required for retrograde early endosome (EE) transport from the hyphal tip. Required for localization of dynein to the mitotic spindle poles. Recruits additional proteins to the dynein complex at SPBs. The polypeptide is Nuclear distribution protein nudF (Emericella nidulans (strain FGSC A4 / ATCC 38163 / CBS 112.46 / NRRL 194 / M139) (Aspergillus nidulans)).